Reading from the N-terminus, the 92-residue chain is Conotoxin Cal22f (92 aa).

A signal peptide spans 1–24 (MMSTKGITLFLCLLLLALATSVNG). Positions 25–44 (GQGTRRSRMTRALHGGRPSA) are excised as a propeptide.

Post-translationally, contains 4 disulfide bonds. Expressed by the venom duct.

Its subcellular location is the secreted. Probable neurotoxin with unknown target. Possibly targets ion channels. This chain is Conotoxin Cal22f, found in Californiconus californicus (California cone).